Reading from the N-terminus, the 642-residue chain is Threonine--tRNA ligase (642 aa).

The region spanning 1-61 is the TGS domain; that stretch reads MPVITLPDGS…ETDAELSIIT (61 aa). Residues 243 to 534 form a catalytic region; the sequence is DHRKIGKQLD…LIEEYAGRFP (292 aa). Residues Cys-334, His-385, and His-511 each contribute to the Zn(2+) site.

This sequence belongs to the class-II aminoacyl-tRNA synthetase family. In terms of assembly, homodimer. It depends on Zn(2+) as a cofactor.

It is found in the cytoplasm. It carries out the reaction tRNA(Thr) + L-threonine + ATP = L-threonyl-tRNA(Thr) + AMP + diphosphate + H(+). In terms of biological role, catalyzes the attachment of threonine to tRNA(Thr) in a two-step reaction: L-threonine is first activated by ATP to form Thr-AMP and then transferred to the acceptor end of tRNA(Thr). Also edits incorrectly charged L-seryl-tRNA(Thr). In Shewanella sp. (strain MR-7), this protein is Threonine--tRNA ligase.